The following is a 151-amino-acid chain: 3-hydroxyacyl-[acyl-carrier-protein] dehydratase FabZ (151 aa).

Residue histidine 54 is part of the active site.

It belongs to the thioester dehydratase family. FabZ subfamily.

The protein localises to the cytoplasm. The catalysed reaction is a (3R)-hydroxyacyl-[ACP] = a (2E)-enoyl-[ACP] + H2O. Its function is as follows. Involved in unsaturated fatty acids biosynthesis. Catalyzes the dehydration of short chain beta-hydroxyacyl-ACPs and long chain saturated and unsaturated beta-hydroxyacyl-ACPs. This Idiomarina loihiensis (strain ATCC BAA-735 / DSM 15497 / L2-TR) protein is 3-hydroxyacyl-[acyl-carrier-protein] dehydratase FabZ.